Here is a 171-residue protein sequence, read N- to C-terminus: Protein GrpE (171 aa).

The segment at 1 to 22 (MNHEHPDIESQQSAADAAAAAG) is disordered.

It belongs to the GrpE family. In terms of assembly, homodimer.

It is found in the cytoplasm. Functionally, participates actively in the response to hyperosmotic and heat shock by preventing the aggregation of stress-denatured proteins, in association with DnaK and GrpE. It is the nucleotide exchange factor for DnaK and may function as a thermosensor. Unfolded proteins bind initially to DnaJ; upon interaction with the DnaJ-bound protein, DnaK hydrolyzes its bound ATP, resulting in the formation of a stable complex. GrpE releases ADP from DnaK; ATP binding to DnaK triggers the release of the substrate protein, thus completing the reaction cycle. Several rounds of ATP-dependent interactions between DnaJ, DnaK and GrpE are required for fully efficient folding. The sequence is that of Protein GrpE from Stenotrophomonas maltophilia (strain R551-3).